The following is a 153-amino-acid chain: Lysine-acyltransferase RtxC (153 aa).

H32 is an active-site residue.

This sequence belongs to the RTX toxin acyltransferase family.

The protein resides in the cytoplasm. It catalyses the reaction a fatty acyl-[ACP] + L-lysyl-[protein] = N(6)-(fatty acyl)-L-lysyl-[protein] + holo-[ACP] + H(+). In terms of biological role, catalyzes fatty acylation of the protoxin (RtxA) at internal lysine residues, thereby converting it to the active toxin. The polypeptide is Lysine-acyltransferase RtxC (rtxC) (Vibrio cholerae serotype O1 (strain ATCC 39315 / El Tor Inaba N16961)).